Here is a 487-residue protein sequence, read N- to C-terminus: Glutamyl-tRNA(Gln) amidotransferase subunit A (487 aa).

Active-site charge relay system residues include Lys74 and Ser149. Catalysis depends on Ser173, which acts as the Acyl-ester intermediate.

This sequence belongs to the amidase family. GatA subfamily. As to quaternary structure, heterotrimer of A, B and C subunits.

It catalyses the reaction L-glutamyl-tRNA(Gln) + L-glutamine + ATP + H2O = L-glutaminyl-tRNA(Gln) + L-glutamate + ADP + phosphate + H(+). Its function is as follows. Allows the formation of correctly charged Gln-tRNA(Gln) through the transamidation of misacylated Glu-tRNA(Gln) in organisms which lack glutaminyl-tRNA synthetase. The reaction takes place in the presence of glutamine and ATP through an activated gamma-phospho-Glu-tRNA(Gln). This chain is Glutamyl-tRNA(Gln) amidotransferase subunit A, found in Synechococcus sp. (strain WH7803).